Reading from the N-terminus, the 662-residue chain is Intracellular exo-alpha-(1-&gt;5)-L-arabinofuranosidase (662 aa).

3 residues coordinate alpha-L-arabinofuranose: Glu27, Asn72, and Asn174. Residue Glu175 is the Proton donor/acceptor of the active site. Alpha-L-arabinofuranose contacts are provided by Tyr246, Glu294, and Gln352. Glu294 functions as the Nucleophile in the catalytic mechanism. Disordered regions lie at residues 454-483, 497-548, and 588-662; these read LADADPDARNTLAEPERVVPHPVDGTSLRD, SIRC…RTAR, and WTRW…ARRC. Residues 519 to 533 are compositionally biased toward low complexity; it reads TGTPPAAPPSSSSAP. Over residues 537–547 the composition is skewed to basic and acidic residues; it reads PTARRSPDRTA. Composition is skewed to low complexity over residues 590-603, 628-641, and 649-662; these read RWAPAPRSGSPSRR, RRSPPGSAPGTPAP, and AGASRGAPRTARRC.

Belongs to the glycosyl hydrolase 51 family. Homohexamer; trimer of dimers.

Its subcellular location is the cytoplasm. The enzyme catalyses Hydrolysis of terminal non-reducing alpha-L-arabinofuranoside residues in alpha-L-arabinosides.. The protein operates within glycan metabolism; L-arabinan degradation. Functionally, involved in the degradation of arabinan and is a key enzyme in the complete degradation of the plant cell wall. Catalyzes the cleavage of terminal alpha-(1-&gt;5)-arabinofuranosyl bonds in different hemicellulosic homopolysaccharides (arabino-oligoxylosides, branched and debranched arabinans). It acts rapidly on the short-chain arabino-oligoxylosides from digestion of xylan with xylanases. It hydrolyzes slowly arabinan and arabinoxylan from wheat and rye flour. In Streptomyces lividans, this protein is Intracellular exo-alpha-(1-&gt;5)-L-arabinofuranosidase.